Here is a 1456-residue protein sequence, read N- to C-terminus: Sterol 3-beta-glucosyltransferase (1456 aa).

Over residues 60–70 the composition is skewed to acidic residues; the sequence is ESDEEDGDEVE. 2 disordered regions span residues 60–113 and 128–156; these read ESDE…SISH and LSPH…TQSE. Residues 71-104 show a composition bias toward low complexity; sequence TPSTTTTAVSPSATMSAPSPTATAPTPHSGTHTP. Residues 137 to 146 are compositionally biased toward basic and acidic residues; that stretch reads SSHEASRRGS. Positions 200-247 constitute a GRAM 1 domain; it reads QKLKGFAALDVDEQLIADYPVWLLKNVLIQGHLYITAKHMCFLSYLPR. The PH domain maps to 251 to 351; it reads ANIRSGTLVK…WVKALQKEIF (101 aa). Disordered regions lie at residues 462-512 and 524-776; these read HSAH…PRLP and DKCD…QDTF. A compositionally biased stretch (basic and acidic residues) spans 496–508; the sequence is QPHERDEKRDSKL. The segment covering 556-567 has biased composition (polar residues); that stretch reads LASQRTSSSTLF. Composition is skewed to low complexity over residues 576-606 and 647-676; these read SQPT…PASA and GGAT…SSPG. The span at 677–696 shows a compositional bias: gly residues; it reads TPGGLGGPGAVGAGGPGVMG. Positions 719–735 are enriched in low complexity; sequence APHDPAAAAAAADAAAP. The region spanning 827-893 is the GRAM 2 domain; that stretch reads ERFQKRFALG…KVVENATKDS (67 aa). Ser1004, Arg1005, Asp1007, Asn1279, Asn1307, His1310, His1323, Ser1326, Gly1327, Thr1328, Asp1347, and Gln1348 together coordinate UDP-alpha-D-glucose.

It belongs to the glycosyltransferase 28 family.

It is found in the cytoplasm. The protein localises to the membrane. The enzyme catalyses a sterol + UDP-alpha-D-glucose = a sterol 3-beta-D-glucoside + UDP + H(+). The catalysed reaction is ergosterol + UDP-alpha-D-glucose = ergosteryl 3-beta-D-glucoside + UDP + H(+). Its function is as follows. Sterol glycosyltransferase responsible for the glycosylation of ergosterol to form ergosterol-glucoside. The chain is Sterol 3-beta-glucosyltransferase from Yarrowia lipolytica (strain CLIB 122 / E 150) (Yeast).